A 526-amino-acid chain; its full sequence is ATP synthase subunit alpha (526 aa).

Position 171–178 (171–178) interacts with ATP; that stretch reads GDRQTGKT.

This sequence belongs to the ATPase alpha/beta chains family. In terms of assembly, F-type ATPases have 2 components, CF(1) - the catalytic core - and CF(0) - the membrane proton channel. CF(1) has five subunits: alpha(3), beta(3), gamma(1), delta(1), epsilon(1). CF(0) has four main subunits: a, b, b' and c.

Its subcellular location is the cell inner membrane. It carries out the reaction ATP + H2O + 4 H(+)(in) = ADP + phosphate + 5 H(+)(out). In terms of biological role, produces ATP from ADP in the presence of a proton gradient across the membrane. The alpha chain is a regulatory subunit. The polypeptide is ATP synthase subunit alpha (Pelodictyon phaeoclathratiforme (strain DSM 5477 / BU-1)).